We begin with the raw amino-acid sequence, 100 residues long: Eukaryotic translation initiation factor 4E-binding protein 3 (100 aa).

The short motif at 40–46 (YDRKFLL) is the YXXXXLphi motif element. A disordered region spans residues 81–100 (LKEQETEEEIPDDAQFEMDI). Over residues 85-100 (ETEEEIPDDAQFEMDI) the composition is skewed to acidic residues. The TOS motif motif lies at 96–100 (FEMDI).

It belongs to the eIF4E-binding protein family. In terms of assembly, interacts with EIF4E. Interacts with RPA2 (in unphosphorylated form via N-terminus); the interaction enhances EIF4EBP3-mediated inhibition of EIF4E-mediated mRNA nuclear export. Phosphorylated. In terms of tissue distribution, expression is highest in skeletal muscle, heart, kidney, and pancreas, whereas there is very little expression in brain and thymus.

It is found in the cytoplasm. The protein localises to the nucleus. Functionally, repressor of translation initiation that regulates EIF4E activity by preventing its assembly into the eIF4F complex: the hypophosphorylated form competes with EIF4G1/EIF4G3 and strongly binds to EIF4E, leading to repression of translation. In contrast, the hyperphosphorylated form dissociates from EIF4E, allowing interaction between EIF4G1/EIF4G3 and EIF4E, leading to initiation of translation. Inhibits EIF4E-mediated mRNA nuclear export. This Homo sapiens (Human) protein is Eukaryotic translation initiation factor 4E-binding protein 3 (EIF4EBP3).